Consider the following 211-residue polypeptide: MRVLIAGLMASVFAIAGVSAAQAADRVDQVPEAPVAQEAPVKPAGSWEGFYLGGAGTYNMGDFGSDRHTYGFGGQVFTGYNWQQGQIVYGVESDLGYSGDDVSSGGVENKYGWNGSVRGRVGYDMNPFLLYGTAGLAIGDVKVSDDTSDESKTNFGYTVGAGVEAFVTNNITTRLEYRYTDYQSKDYDLDSGSFSRGYDENSVKLGIGVKF.

An N-terminal signal peptide occupies residues Met-1–Ala-23.

The protein belongs to the Omp25/RopB family.

The protein localises to the cell outer membrane. The sequence is that of 22 kDa outer membrane protein (ropB) from Rhizobium leguminosarum bv. viciae.